The chain runs to 145 residues: MLTAEEKAAVTAFWGKVHVDEVGGEALGRLLVVYPWTQRFFESFGDLSTADAVMNNPKVKAHGKKVLDSFSNGMKHLDDLKGTFAALSELHCDKLHVDPENFKLLGNVLVVVLARHFGKEFTPVLQADFQKVVAGVANALAHRYH.

Residues 1-145 (MLTAEEKAAV…VANALAHRYH (145 aa)) form the Globin domain. T11 carries the phosphothreonine modification. S43 is modified (phosphoserine). N6-acetyllysine is present on K58. H62 lines the heme b pocket. The residue at position 81 (K81) is an N6-acetyllysine. H91 is a heme b binding site. C92 is modified (S-nitrosocysteine).

Belongs to the globin family. As to quaternary structure, heterotetramer of two alpha chains and two beta chains. In terms of tissue distribution, red blood cells.

Functionally, involved in oxygen transport from the lung to the various peripheral tissues. The chain is Hemoglobin subunit beta (HBB) from Bos gaurus frontalis (Domestic gayal).